The following is a 771-amino-acid chain: MDVVSPELNSLLPDEIMDTEAMDEDPPASHLTPPPQSAPESAQVPMETEVPEIISICPTTASMQAISTNAKSTTSSTTQLLLTPSSSSSTTTKNATPTLPKIPSLSVPPNHQLIINKVAADGKSPGGAVIKQEGQKLLVAGLSKTGQPIMLALPHAWNKPATSQGSGDAKSQPTQIKMVTAMGKPVIAVSSASQLVASSTPLQAQHLKTLQITKKPPVSTAGPMITKLIITKALNNKVLSSPGSVSPVVTGRVVSQSTPLTPPRTIAIGETISTVPQNAATNSKVAISPLKSPSKLTVVSVTSQSSNSPQKSMTLPLNVALGQQILTVQQSAVTSPAKAGSSQSTTQTVKPVQTVTVPTSQFKTIIPLTTPPNVQQIQVPGSRFHYVRLVTATTGSSTVQTGGSTNTNPSIQPAKPVMMNAAVRMSVPIVPAQTAKQVVPKPLSSAAQVVTTSQTPQRLIMPATHLPQIQPNLTNLPPGTVLAPAHGSGNVGYAVLPAPYVTQIPQPAFVTLTSSSTFSTATPSQAQARLSLNGLSTSEANSRPRKPCNCTRSQCLKLYCDCFANGEFCNNCNCVNCFNNLDHESERLKAIKACLDRNPVAFKPKIGKGKEGESDRRHSKGCNCKKSGCLKNYCECYEAKIMCSSICKCMGCKNFEESPERKTLMHLADAAEVRVQQQTAAKTKLSSQISDLLTRTTPAITSGGGKLPYTFVTKEVAEATCDCLLEQAEQAELTNQPQAMAERLILEEFGRCLHRIISFAGKAKTDCPINC.

Disordered stretches follow at residues 21–44 (AMDE…SAQV) and 68–105 (TNAK…IPSL). A compositionally biased stretch (low complexity) spans 72–92 (STTSSTTQLLLTPSSSSSTTT). Residues serine 288, serine 292, and serine 308 each carry the phosphoserine modification. In terms of domain architecture, CRC spans 544 to 657 (PRKPCNCTRS…KCMGCKNFEE (114 aa)). A DNA-binding region spans residues 546–559 (KPCNCTRSQCLKLY). 9 residues coordinate Zn(2+): cysteine 548, cysteine 550, cysteine 555, cysteine 560, cysteine 562, cysteine 569, cysteine 572, cysteine 574, and cysteine 577. The linker stretch occupies residues 606–619 (IGKGKEGESDRRHS). Zn(2+) contacts are provided by cysteine 622, cysteine 624, cysteine 629, cysteine 634, cysteine 636, cysteine 643, cysteine 647, cysteine 649, and cysteine 652. The interval 622–635 (CNCKKSGCLKNYCE) is DNA-binding.

It belongs to the lin-54 family. In terms of assembly, component of the DREAM complex.

It localises to the nucleus. Functionally, component of the DREAM complex, a multiprotein complex that can both act as a transcription activator or repressor depending on the context. Specifically recognizes the consensus motif 5'-TTYRAA-3' in target DNA. This Danio rerio (Zebrafish) protein is Protein lin-54 homolog (lin54).